A 477-amino-acid chain; its full sequence is Exodeoxyribonuclease 7 large subunit (477 aa).

The segment at 452 to 477 (KAAAAPKRVKKSPPPGTSGAQEDLFG) is disordered.

This sequence belongs to the XseA family. As to quaternary structure, heterooligomer composed of large and small subunits.

The protein resides in the cytoplasm. It catalyses the reaction Exonucleolytic cleavage in either 5'- to 3'- or 3'- to 5'-direction to yield nucleoside 5'-phosphates.. Functionally, bidirectionally degrades single-stranded DNA into large acid-insoluble oligonucleotides, which are then degraded further into small acid-soluble oligonucleotides. This Erythrobacter litoralis (strain HTCC2594) protein is Exodeoxyribonuclease 7 large subunit.